A 421-amino-acid polypeptide reads, in one-letter code: Thymidine phosphorylase (421 aa).

It belongs to the thymidine/pyrimidine-nucleoside phosphorylase family. In terms of assembly, homodimer.

The enzyme catalyses thymidine + phosphate = 2-deoxy-alpha-D-ribose 1-phosphate + thymine. Functionally, the enzymes which catalyze the reversible phosphorolysis of pyrimidine nucleosides are involved in the degradation of these compounds and in their utilization as carbon and energy sources, or in the rescue of pyrimidine bases for nucleotide synthesis. The chain is Thymidine phosphorylase (deoA) from Mycoplasma genitalium (strain ATCC 33530 / DSM 19775 / NCTC 10195 / G37) (Mycoplasmoides genitalium).